The primary structure comprises 408 residues: Argininosuccinate synthase (408 aa).

ATP contacts are provided by residues alanine 10–serine 18 and alanine 37. L-citrulline is bound by residues tyrosine 90 and serine 95. ATP is bound at residue glycine 120. L-aspartate is bound by residues threonine 122, asparagine 126, and aspartate 127. Asparagine 126 contacts L-citrulline. Residues arginine 130, serine 181, serine 190, glutamate 266, and tyrosine 278 each contribute to the L-citrulline site.

This sequence belongs to the argininosuccinate synthase family. Type 1 subfamily. As to quaternary structure, homotetramer.

The protein resides in the cytoplasm. The enzyme catalyses L-citrulline + L-aspartate + ATP = 2-(N(omega)-L-arginino)succinate + AMP + diphosphate + H(+). It functions in the pathway amino-acid biosynthesis; L-arginine biosynthesis; L-arginine from L-ornithine and carbamoyl phosphate: step 2/3. In Chromobacterium violaceum (strain ATCC 12472 / DSM 30191 / JCM 1249 / CCUG 213 / NBRC 12614 / NCIMB 9131 / NCTC 9757 / MK), this protein is Argininosuccinate synthase.